Reading from the N-terminus, the 101-residue chain is uncharacterized protein (101 aa).

It is found in the mitochondrion. This is an uncharacterized protein from Arabidopsis thaliana (Mouse-ear cress).